A 122-amino-acid polypeptide reads, in one-letter code: Large ribosomal subunit protein uL14 (122 aa).

This sequence belongs to the universal ribosomal protein uL14 family. In terms of assembly, part of the 50S ribosomal subunit. Forms a cluster with proteins L3 and L19. In the 70S ribosome, L14 and L19 interact and together make contacts with the 16S rRNA in bridges B5 and B8.

In terms of biological role, binds to 23S rRNA. Forms part of two intersubunit bridges in the 70S ribosome. The polypeptide is Large ribosomal subunit protein uL14 (Stenotrophomonas maltophilia (strain R551-3)).